Here is a 530-residue protein sequence, read N- to C-terminus: MEPTAPTGQARAAATKLSEAVGAALQEPQRQRRLVLVIVCVALLLDNMLYMVIVPIVPDYIAHMRGGSEGPTLVSEVWEPTLPPPTLANASAYLANTSASPTAAGSARSILRPRYPTESEDVKIGVLFASKAILQLLVNPLSGPFIDRMSYDVPLLIGLGVMFASTVMFAFAEDYATLFAARSLQGLGSAFADTSGIAMIADKYPEEPERSRALGVALAFISFGSLVAPPFGGILYEFAGKRVPFLVLAAVSLFDALLLLAVAKPFSAAARARANLPVGTPIHRLMLDPYIAVVAGALTTCNIPLAFLEPTIATWMKHTMAASEWEMGMVWLPAFVPHVLGVYLTVRLAARYPHLQWLYGALGLAVIGVSSCVVPACRSFAPLVVSLCGLCFGIALVDTALLPTLAFLVDVRHVSVYGSVYAIADISYSVAYALGPIVAGHIVHSLGFEQLSLGMGLANLLYAPVLLLLRNVGLLTRSRSERDVLLDEPPQGLYDAVRLREVQGKDGGEPCSPPGPFDGCEDDYNYYSRS.

At 1–33 the chain is on the cytoplasmic side; it reads MEPTAPTGQARAAATKLSEAVGAALQEPQRQRR. Residues 34–54 form a helical membrane-spanning segment; the sequence is LVLVIVCVALLLDNMLYMVIV. The Lumenal, vesicle portion of the chain corresponds to 55–125; that stretch reads PIVPDYIAHM…PTESEDVKIG (71 aa). N-linked (GlcNAc...) asparagine glycosylation is found at asparagine 89 and asparagine 96. A helical transmembrane segment spans residues 126 to 146; the sequence is VLFASKAILQLLVNPLSGPFI. Residues 147–152 are Cytoplasmic-facing; that stretch reads DRMSYD. Residues 153–173 traverse the membrane as a helical segment; that stretch reads VPLLIGLGVMFASTVMFAFAE. Residues 174–182 lie on the Lumenal, vesicle side of the membrane; that stretch reads DYATLFAAR. A helical transmembrane segment spans residues 183–203; sequence SLQGLGSAFADTSGIAMIADK. The Cytoplasmic portion of the chain corresponds to 204-213; that stretch reads YPEEPERSRA. Residues 214–234 form a helical membrane-spanning segment; sequence LGVALAFISFGSLVAPPFGGI. Topologically, residues 235 to 242 are lumenal, vesicle; sequence LYEFAGKR. A helical transmembrane segment spans residues 243–263; it reads VPFLVLAAVSLFDALLLLAVA. Residues 264 to 289 lie on the Cytoplasmic side of the membrane; the sequence is KPFSAAARARANLPVGTPIHRLMLDP. Residues 290-310 form a helical membrane-spanning segment; it reads YIAVVAGALTTCNIPLAFLEP. Residues 311-325 are Lumenal, vesicle-facing; sequence TIATWMKHTMAASEW. A helical membrane pass occupies residues 326–346; sequence EMGMVWLPAFVPHVLGVYLTV. Residues 347-356 lie on the Cytoplasmic side of the membrane; it reads RLAARYPHLQ. The helical transmembrane segment at 357-377 threads the bilayer; it reads WLYGALGLAVIGVSSCVVPAC. Topologically, residues 378-388 are lumenal, vesicle; sequence RSFAPLVVSLC. The helical transmembrane segment at 389 to 409 threads the bilayer; it reads GLCFGIALVDTALLPTLAFLV. Over 410 to 422 the chain is Cytoplasmic; sequence DVRHVSVYGSVYA. The helical transmembrane segment at 423–443 threads the bilayer; that stretch reads IADISYSVAYALGPIVAGHIV. Residues 444 to 447 lie on the Lumenal, vesicle side of the membrane; it reads HSLG. Residues 448-468 traverse the membrane as a helical segment; sequence FEQLSLGMGLANLLYAPVLLL. The Cytoplasmic segment spans residues 469 to 530; sequence LRNVGLLTRS…EDDYNYYSRS (62 aa). Positions 471 to 530 are mediates interaction with SEC14L1; it reads NVGLLTRSRSERDVLLDEPPQGLYDAVRLREVQGKDGGEPCSPPGPFDGCEDDYNYYSRS. Positions 504 to 530 are disordered; it reads GKDGGEPCSPPGPFDGCEDDYNYYSRS.

Belongs to the major facilitator superfamily. Vesicular transporter family. Interacts with SEC14L1. In terms of tissue distribution, high expression in all major cholinergic cell groups, including peripheral postganglionic parasympathetic cells, preganglionic sympathetic and parasympathetic cells, ventral spinal cord and brainstem motoneurons, cell groups in the basal forebrain, the habenula and the corpus striatum. Weakly expressed in the cortex and hippocampus.

Its subcellular location is the cytoplasmic vesicle. It localises to the secretory vesicle. The protein localises to the synaptic vesicle membrane. It carries out the reaction acetylcholine(out) + 2 H(+)(in) = acetylcholine(in) + 2 H(+)(out). It catalyses the reaction choline(in) + 2 H(+)(out) = choline(out) + 2 H(+)(in). The catalysed reaction is serotonin(in) + 2 H(+)(out) = serotonin(out) + 2 H(+)(in). With respect to regulation, potently inhibited by L-vesamicol. Its function is as follows. Electrogenic antiporter that exchanges one cholinergic neurotransmitter, acetylcholine or choline, with two intravesicular protons across the membrane of synaptic vesicles. Uses the electrochemical proton gradient established by the V-type proton-pump ATPase to store neurotransmitters inside the vesicles prior to their release via exocytosis. Determines cholinergic vesicular quantal size at presynaptic nerve terminals in developing neuro-muscular junctions with an impact on motor neuron differentiation and innervation pattern. Part of forebrain cholinergic system, regulates hippocampal synapse transmissions that underlie spatial memory formation. Can transport serotonin. The protein is Vesicular acetylcholine transporter (Slc18a3) of Rattus norvegicus (Rat).